Reading from the N-terminus, the 387-residue chain is Protein spaetzle 5 (387 aa).

The N-terminal stretch at M1–A29 is a signal peptide. Positions H30–R284 are excised as a propeptide. The disordered stretch occupies residues Q133–S197. 2 N-linked (GlcNAc...) asparagine glycosylation sites follow: N195 and N204. Disordered stretches follow at residues K219–R256 and G269–T291. The segment covering Q237–P247 has biased composition (acidic residues). Positions L276–S286 are enriched in basic residues. Residues T291–I384 form the Spaetzle domain. 3 disulfides stabilise this stretch: C293-C350, C331-C380, and C340-C382.

As to quaternary structure, homodimer; disulfide-linked. In terms of tissue distribution, detected in the fan-shaped body which is a component of the locomotion center in the central nervous system (CNS) (at protein level).

Neurotrophin which may function as a ligand for the Toll-related receptors Toll-6 and Toll-7. Binds to Toll-7 and Toll-6, and probably acts as their ligands in the promotion of motor axon targeting and neuronal survival in the central nervous system (CNS). Involved in synaptic targeting of ISNb/d motorneurons and also some SNa motorneurons. May be involved in the normal development of specific neurons at the neuromuscular junction. The polypeptide is Protein spaetzle 5 (Drosophila melanogaster (Fruit fly)).